The following is a 154-amino-acid chain: 6,7-dimethyl-8-ribityllumazine synthase (154 aa).

5-amino-6-(D-ribitylamino)uracil is bound by residues Trp22, 56-58 (AWE), and 80-82 (CVI). (2S)-2-hydroxy-3-oxobutyl phosphate is bound at residue 85-86 (DT). His88 functions as the Proton donor in the catalytic mechanism. Position 113 (Asn113) interacts with 5-amino-6-(D-ribitylamino)uracil. Arg127 provides a ligand contact to (2S)-2-hydroxy-3-oxobutyl phosphate.

The protein belongs to the DMRL synthase family. Forms an icosahedral capsid composed of 60 subunits, arranged as a dodecamer of pentamers.

It catalyses the reaction (2S)-2-hydroxy-3-oxobutyl phosphate + 5-amino-6-(D-ribitylamino)uracil = 6,7-dimethyl-8-(1-D-ribityl)lumazine + phosphate + 2 H2O + H(+). It participates in cofactor biosynthesis; riboflavin biosynthesis; riboflavin from 2-hydroxy-3-oxobutyl phosphate and 5-amino-6-(D-ribitylamino)uracil: step 1/2. Its function is as follows. Catalyzes the formation of 6,7-dimethyl-8-ribityllumazine by condensation of 5-amino-6-(D-ribitylamino)uracil with 3,4-dihydroxy-2-butanone 4-phosphate. This is the penultimate step in the biosynthesis of riboflavin. The sequence is that of 6,7-dimethyl-8-ribityllumazine synthase from Xanthomonas campestris pv. campestris (strain 8004).